Here is a 271-residue protein sequence, read N- to C-terminus: Mannosyl-3-phosphoglycerate phosphatase (271 aa).

Aspartate 13 serves as the catalytic Nucleophile. The Mg(2+) site is built by aspartate 13, aspartate 15, and aspartate 214.

Belongs to the HAD-like hydrolase superfamily. MPGP family. Requires Mg(2+) as cofactor.

It is found in the cytoplasm. It catalyses the reaction 2-O-(alpha-D-mannosyl)-3-phosphoglycerate + H2O = (2R)-2-O-(alpha-D-mannosyl)-glycerate + phosphate. The protein is Mannosyl-3-phosphoglycerate phosphatase (yedP) of Escherichia coli O6:H1 (strain CFT073 / ATCC 700928 / UPEC).